A 301-amino-acid chain; its full sequence is Thymidylate synthase (301 aa).

Residues Arg38 and 163-164 contribute to the dUMP site; that span reads RR. The active-site Nucleophile is Cys183. Residues 203–206, Asn214, and 244–246 contribute to the dUMP site; these read RSGD and HIY. Asp206 lines the (6R)-5,10-methylene-5,6,7,8-tetrahydrofolate pocket. Ala300 contacts (6R)-5,10-methylene-5,6,7,8-tetrahydrofolate.

Belongs to the thymidylate synthase family. As to quaternary structure, homodimer.

It carries out the reaction dUMP + (6R)-5,10-methylene-5,6,7,8-tetrahydrofolate = 7,8-dihydrofolate + dTMP. Its pathway is pyrimidine metabolism; dTTP biosynthesis. In terms of biological role, catalyzes the reductive methylation of deoxyuridylate to thymidylate. This is Thymidylate synthase from Varicella-zoster virus (strain Dumas) (HHV-3).